Here is a 177-residue protein sequence, read N- to C-terminus: Large ribosomal subunit protein uL6 (177 aa).

Belongs to the universal ribosomal protein uL6 family. As to quaternary structure, part of the 50S ribosomal subunit.

Its function is as follows. This protein binds to the 23S rRNA, and is important in its secondary structure. It is located near the subunit interface in the base of the L7/L12 stalk, and near the tRNA binding site of the peptidyltransferase center. The protein is Large ribosomal subunit protein uL6 of Azoarcus sp. (strain BH72).